The following is a 147-amino-acid chain: Hemoglobin subunit beta (147 aa).

Val2 bears the N-acetylvaline mark. Positions 3 to 147 (HLTPDEKAAV…VANALAHKYH (145 aa)) constitute a Globin domain. Position 13 is a phosphothreonine (Thr13). Phosphoserine is present on Ser45. N6-acetyllysine is present on Lys60. His64 lines the heme b pocket. Lys83 bears the N6-acetyllysine mark. His93 is a binding site for heme b. An S-nitrosocysteine modification is found at Cys94. Lys145 bears the N6-acetyllysine mark.

This sequence belongs to the globin family. Heterotetramer of two alpha chains and two beta chains. Red blood cells.

In terms of biological role, involved in oxygen transport from the lung to the various peripheral tissues. The polypeptide is Hemoglobin subunit beta (HBB) (Colobus polykomos (Western black-and-white colobus monkey)).